Here is an 830-residue protein sequence, read N- to C-terminus: MEDDDGRESFEINDMDLEYAMNPGGRRRFQNKDQATYGVFAPDSDDDDDEQGTSRGPYKKRSKISAPMSFVSGGIQQGNKIDKDDPASLNLNLGGEKKPKEDDEGSIQIDFDKRTKKAPKQNGAQVFAGMRSSANHGAADINQFGSWMRGDGNSNKIMKMMQAMGYKPGEGLGAQGQGIVEPVQAQLRKGRGAVGAYGKESTATGPKFGESAADAQKRMAQEGTSSRPTNDDQEKSGLKIKGSWKKSQTVKTKYRTIEDVMEEGMSASRPASHQQSQQYSNIKVIDMTGKQQKIYSGYDSFSMKTRSEYDTVDDEERTVFDVPELIHNLNLLVDLTEEGIRRSNQQLISLKDQTTALEYDLQQVQKSLGTEEQEAQHIKDVYELIDGFSSNRSPSMEECQELFRRLRSEFPHEYELYSLETVAIPTVLPLIQKYFVAWKPLEDKNYGCELISTWRDILDDSKNGRKMTFGHNKTKGDEIRAYDRIIWEGILPSIRRACLQWDPSTQMHEMIELVEQWIPLLSAWITENILEQLVVPKIAERVNQWDPMTDEIPIHEWLVPWLVLLGDRIQTVMPPIRQKLSKALKLWDPMDRSALETLRPWQNVWSAATFSAFIAQNIVPKLGVALDTMELNPTMNPEYPEWTACMEWLEFTHPDAIANIVTKYFFPRFYNCLCLWLDSPGVDYNEVKRWYGSWKARIPQVLVNYPTVNENLRRSMIAIGRSLQGEKVGGLQATPIAPMAPPPPMAPHFTQAAPVQKLSLKEIIEYTAGKNGFTYHPQKDRYKDGRQVFWFGALSIYLDSEMVYVMDPIEFVWRPSGLNELIQMAQGAQG.

The segment covering Met1–Leu17 has biased composition (acidic residues). Disordered stretches follow at residues Met1–Asn122 and Ala196–Trp244. Residues Asn153–Lys199 form the G-patch domain.

This sequence belongs to the TFP11/STIP family. As to quaternary structure, identified in the spliceosome C complex. Can assemble into large rod-like polymers. In terms of tissue distribution, detected in muscle cells from body, pharynx and vulva, in neurons from head and tail, in pharyngeal gland and in tail hypodermal cells.

It localises to the nucleus. Its function is as follows. May be involved in pre-mRNA splicing. Required for embryonic development and survival. The chain is Septin and tuftelin-interacting protein 1 homolog (stip-1) from Caenorhabditis elegans.